The chain runs to 565 residues: Proline--tRNA ligase (565 aa).

This sequence belongs to the class-II aminoacyl-tRNA synthetase family. ProS type 1 subfamily. In terms of assembly, homodimer.

It localises to the cytoplasm. It carries out the reaction tRNA(Pro) + L-proline + ATP = L-prolyl-tRNA(Pro) + AMP + diphosphate. Functionally, catalyzes the attachment of proline to tRNA(Pro) in a two-step reaction: proline is first activated by ATP to form Pro-AMP and then transferred to the acceptor end of tRNA(Pro). As ProRS can inadvertently accommodate and process non-cognate amino acids such as alanine and cysteine, to avoid such errors it has two additional distinct editing activities against alanine. One activity is designated as 'pretransfer' editing and involves the tRNA(Pro)-independent hydrolysis of activated Ala-AMP. The other activity is designated 'posttransfer' editing and involves deacylation of mischarged Ala-tRNA(Pro). The misacylated Cys-tRNA(Pro) is not edited by ProRS. The chain is Proline--tRNA ligase from Lactobacillus helveticus (strain DPC 4571).